The following is a 218-amino-acid chain: Octanoyltransferase (218 aa).

The region spanning 31-206 is the BPL/LPL catalytic domain; that stretch reads REAGDEVWLV…QLVKHLDYAE (176 aa). Substrate-binding positions include 70-77, 137-139, and 150-152; these read RGGQVTYH, SLG, and GLA. Cys168 functions as the Acyl-thioester intermediate in the catalytic mechanism.

The protein belongs to the LipB family.

It localises to the cytoplasm. It carries out the reaction octanoyl-[ACP] + L-lysyl-[protein] = N(6)-octanoyl-L-lysyl-[protein] + holo-[ACP] + H(+). It functions in the pathway protein modification; protein lipoylation via endogenous pathway; protein N(6)-(lipoyl)lysine from octanoyl-[acyl-carrier-protein]: step 1/2. In terms of biological role, catalyzes the transfer of endogenously produced octanoic acid from octanoyl-acyl-carrier-protein onto the lipoyl domains of lipoate-dependent enzymes. Lipoyl-ACP can also act as a substrate although octanoyl-ACP is likely to be the physiological substrate. This is Octanoyltransferase from Pseudomonas syringae pv. tomato (strain ATCC BAA-871 / DC3000).